The sequence spans 615 residues: Zinc finger protein 653 (615 aa).

4 disordered regions span residues 1–48 (MAER…ARRR), 95–117 (RSGRHGKPWEQVPKKPKRKKRRR), 176–236 (PLSD…SSGL), and 401–432 (EEKEEPVAPELATTVPESAEPEAEADGEELDG). The Nuclear localization signal signature appears at 107–118 (PKKPKRKKRRRR). Positions 108–117 (KKPKRKKRRR) are enriched in basic residues. Residues 193–205 (AGSSDSSSSGSAS) show a composition bias toward low complexity. Polar residues predominate over residues 226 to 236 (TPTSPVGSSGL). A compositionally biased stretch (acidic residues) spans 419–432 (AEPEAEADGEELDG). The short motif at 445–451 (EPEKRRR) is the Nuclear localization signal element. 5 consecutive C2H2-type zinc fingers follow at residues 467–492 (FHCPYEGCSQVYVALSSFQNHVNLVH), 498–522 (KVCPHPGCGKKFYLSNHLRRHMIIH), 528–550 (FTCETCGKSFKRKNHLEVHRRTH), 556–578 (LQCEICGYQCRQRASLNWHMKKH), and 586–609 (FTCDRCGKRFEKLDSVKFHTLKSH).

It belongs to the krueppel C2H2-type zinc-finger protein family. As to quaternary structure, interacts with NR5A1. In terms of tissue distribution, highly expressed in testis, cerebellum, temporal lobe, hippocampus and the adrenal gland. Moderately expressed in spleen, uterus, thymus, pancreas, kidney, stomach and rectum.

The protein resides in the nucleus. Transcriptional repressor. May repress NR5A1, PPARG, NR1H3, NR4A2, ESR1 and NR3C1 transcriptional activity. This chain is Zinc finger protein 653 (ZNF653), found in Homo sapiens (Human).